An 84-amino-acid polypeptide reads, in one-letter code: Small ribosomal subunit protein bS20 (84 aa).

It belongs to the bacterial ribosomal protein bS20 family.

Its function is as follows. Binds directly to 16S ribosomal RNA. The protein is Small ribosomal subunit protein bS20 of Phocaeicola vulgatus (strain ATCC 8482 / DSM 1447 / JCM 5826 / CCUG 4940 / NBRC 14291 / NCTC 11154) (Bacteroides vulgatus).